We begin with the raw amino-acid sequence, 261 residues long: Glucose 1-dehydrogenase 4 (261 aa).

11-35 (VITGGSTGLGRAMAVRFGQEEAKVV) contacts NAD(+). S145 contributes to the substrate binding site. Y158 serves as the catalytic Proton acceptor.

It belongs to the short-chain dehydrogenases/reductases (SDR) family. Homotetramer.

It carries out the reaction D-glucose + NAD(+) = D-glucono-1,5-lactone + NADH + H(+). It catalyses the reaction D-glucose + NADP(+) = D-glucono-1,5-lactone + NADPH + H(+). In Priestia megaterium (Bacillus megaterium), this protein is Glucose 1-dehydrogenase 4 (gdhIV).